A 104-amino-acid polypeptide reads, in one-letter code: ATP synthase subunit c (104 aa).

2 consecutive transmembrane segments (helical) span residues serine 31–glycine 51 and methionine 75–isoleucine 95.

Belongs to the ATPase C chain family. In terms of assembly, F-type ATPases have 2 components, F(1) - the catalytic core - and F(0) - the membrane proton channel. F(1) has five subunits: alpha(3), beta(3), gamma(1), delta(1), epsilon(1). F(0) has three main subunits: a(1), b(2) and c(10-14). The alpha and beta chains form an alternating ring which encloses part of the gamma chain. F(1) is attached to F(0) by a central stalk formed by the gamma and epsilon chains, while a peripheral stalk is formed by the delta and b chains.

The protein localises to the cell inner membrane. F(1)F(0) ATP synthase produces ATP from ADP in the presence of a proton or sodium gradient. F-type ATPases consist of two structural domains, F(1) containing the extramembraneous catalytic core and F(0) containing the membrane proton channel, linked together by a central stalk and a peripheral stalk. During catalysis, ATP synthesis in the catalytic domain of F(1) is coupled via a rotary mechanism of the central stalk subunits to proton translocation. In terms of biological role, key component of the F(0) channel; it plays a direct role in translocation across the membrane. A homomeric c-ring of between 10-14 subunits forms the central stalk rotor element with the F(1) delta and epsilon subunits. This chain is ATP synthase subunit c, found in Sulfurimonas denitrificans (strain ATCC 33889 / DSM 1251) (Thiomicrospira denitrificans (strain ATCC 33889 / DSM 1251)).